The following is a 728-amino-acid chain: Catalase-peroxidase (728 aa).

The signal sequence occupies residues 1–16 (MDNPTDSAGKCPVAHG). Residues 1–26 (MDNPTDSAGKCPVAHGNTPRSRSNRD) form a disordered region. A cross-link (tryptophyl-tyrosyl-methioninium (Trp-Tyr) (with M-244)) is located at residues 96 to 218 (WHSAGTYRIT…LGAVQMGFIY (123 aa)). Residue His97 is the Proton acceptor of the active site. A cross-link (tryptophyl-tyrosyl-methioninium (Tyr-Met) (with W-96)) is located at residues 218–244 (YVNPEGPNGNSDPLASARDIRETFARM). Residue His259 coordinates heme b.

The protein belongs to the peroxidase family. Peroxidase/catalase subfamily. In terms of assembly, homodimer or homotetramer. The cofactor is heme b. In terms of processing, formation of the three residue Trp-Tyr-Met cross-link is important for the catalase, but not the peroxidase activity of the enzyme.

It carries out the reaction H2O2 + AH2 = A + 2 H2O. The enzyme catalyses 2 H2O2 = O2 + 2 H2O. Functionally, bifunctional enzyme with both catalase and broad-spectrum peroxidase activity. This Rhizobium leguminosarum bv. phaseoli protein is Catalase-peroxidase.